The primary structure comprises 498 residues: Type VI secretion system sheath protein TssC1 (498 aa).

As to quaternary structure, forms a heterodimer with TssB1. Heterodimers assemble to form the sheath of the T6SS machinery. Interacts with TssA1.

In terms of biological role, core component of the H1 type VI (H1-T6SS) secretion system that plays a role in the release of toxins targeting both eukaryotic and prokaryotic species. Forms the sheath of the structure by assembling into tubules together with TssB1 resulting in the stacking of cogwheel-like structures showing predominantly a 12-fold symmetry. The sheath contracts to provide the energy needed for effector delivery. The protein is Type VI secretion system sheath protein TssC1 of Pseudomonas aeruginosa (strain ATCC 15692 / DSM 22644 / CIP 104116 / JCM 14847 / LMG 12228 / 1C / PRS 101 / PAO1).